The primary structure comprises 125 residues: Small ribosomal subunit protein eS8 (125 aa).

Positions 1–35 (MQWQGRSVRKPSGGRYHTSQGKKRTEIGRAPAETH) are disordered.

It belongs to the eukaryotic ribosomal protein eS8 family. Part of the 30S ribosomal subunit.

This Methanoculleus marisnigri (strain ATCC 35101 / DSM 1498 / JR1) protein is Small ribosomal subunit protein eS8.